A 370-amino-acid chain; its full sequence is NSFL1 cofactor p47 (370 aa).

The tract at residues 54 to 73 is disordered; sequence SQATPSSVSRGTAPSDNRVT. Phosphoserine is present on residues Ser-74, Ser-102, and Ser-114. Disordered regions lie at residues 80 to 116 and 138 to 157; these read HDQDEEEEEEEGQRFYAGGSERSGQQIVGPPRKKSPN and TKSPGETSKPRPFAGGGYRL. Positions 109–115 match the Nuclear localization signal motif; that stretch reads PPRKKSP. Phosphoserine; by CDK1 is present on Ser-140. Phosphotyrosine is present on Tyr-167. Residues 172–175 carry the Nuclear localization signal motif; sequence RRRH. Phosphoserine occurs at positions 176, 192, and 272. Positions 179–244 constitute an SEP domain; that stretch reads DVHVVLKLWK…MEDHRDEDFV (66 aa). Residues 291-368 enclose the UBX domain; sequence EAEPTTNIQI…NLLNAVIVQR (78 aa).

The protein belongs to the NSFL1C family. Part of a ternary complex containing STX5A, NSFL1C and VCP. NSFL1C forms a homotrimer that binds to one end of a VCP homohexamer. The complex binds to membranes enriched in phosphatidylethanolamine-containing lipids and promotes Golgi membrane fusion. Interaction with VCIP135 leads to dissociation of the complex via ATP hydrolysis by VCP. Binds ubiquitin and mono-ubiquitinated proteins via its N-terminal UBA-like domain when bound to VCP. Phosphorylated during mitosis. Phosphorylation inhibits interaction with Golgi membranes and is required for the fragmentation of the Golgi stacks during mitosis. In terms of tissue distribution, highly expressed in heart, brain, spleen, lung, liver, muscle, kidney and testis.

It is found in the nucleus. The protein resides in the golgi apparatus. It localises to the golgi stack. Its subcellular location is the chromosome. The protein localises to the cytoplasm. It is found in the cytoskeleton. The protein resides in the microtubule organizing center. It localises to the centrosome. Reduces the ATPase activity of VCP. Necessary for the fragmentation of Golgi stacks during mitosis and for VCP-mediated reassembly of Golgi stacks after mitosis. May play a role in VCP-mediated formation of transitional endoplasmic reticulum (tER). Inhibits the activity of CTSL (in vitro). Together with UBXN2B/p37, regulates the centrosomal levels of kinase AURKA/Aurora A during mitotic progression by promoting AURKA removal from centrosomes in prophase. Also, regulates spindle orientation during mitosis. The protein is NSFL1 cofactor p47 (Nsfl1c) of Rattus norvegicus (Rat).